The primary structure comprises 248 residues: MSNGKLILLRHGQSQWNSTNQFTGWVDVDLTEKGEAEAKRGGELIKEKGLHPEVLYTSLLRRAIRTADIALNAADRLWIPVIRDWRLNERHYGALQGLNKADTKEKYGNEKFMAWRRSYDTRPPELEDGAEYSQSDDPRYANLDSVPKTECLKDVVARFVPYFKEEILPRAQKGQTVLIAAHGNSLRALVKHLDNISDDDIAGLNIPTGIPLVYEIAEDGSVVNPGGTYLDPEAAAAGAAAVANQGSK.

Residues 10-17 (RHGQSQWN), 23-24 (TG), Arg62, 89-92 (ERHY), Lys100, 116-117 (RR), and 183-184 (GN) each bind substrate. His11 serves as the catalytic Tele-phosphohistidine intermediate. Residue Glu89 is the Proton donor/acceptor of the active site.

The protein belongs to the phosphoglycerate mutase family. BPG-dependent PGAM subfamily.

The catalysed reaction is (2R)-2-phosphoglycerate = (2R)-3-phosphoglycerate. The protein operates within carbohydrate degradation; glycolysis; pyruvate from D-glyceraldehyde 3-phosphate: step 3/5. Functionally, catalyzes the interconversion of 2-phosphoglycerate and 3-phosphoglycerate. The polypeptide is 2,3-bisphosphoglycerate-dependent phosphoglycerate mutase (Corynebacterium kroppenstedtii (strain DSM 44385 / JCM 11950 / CIP 105744 / CCUG 35717)).